Consider the following 523-residue polypeptide: Probable 3-ketoacyl-CoA synthase 20 (523 aa).

2 helical membrane passes run 31 to 55 and 78 to 96; these read IVAVTALVAAAPRLSTLLAAAAAGG and ALAVACWAAALAAYTYAAS. Positions 93 to 382 constitute an FAE domain; that stretch reads YAASRPRPVY…RFLATVVLKR (290 aa). Active-site residues include Cys237, His317, His401, His405, and Asn438.

This sequence belongs to the thiolase-like superfamily. Chalcone/stilbene synthases family. As to expression, highly expressed in leaf sheaths. Expressed in leaves, flag leaves and panicles.

Its subcellular location is the membrane. The catalysed reaction is a very-long-chain acyl-CoA + malonyl-CoA + H(+) = a very-long-chain 3-oxoacyl-CoA + CO2 + CoA. In terms of biological role, contributes to fatty acids elongation. Plays a role in controlling leaf anatomy and plant architecture. This is Probable 3-ketoacyl-CoA synthase 20 from Oryza sativa subsp. japonica (Rice).